Consider the following 509-residue polypeptide: Maturase K (509 aa).

Belongs to the intron maturase 2 family. MatK subfamily.

The protein localises to the plastid. Its subcellular location is the chloroplast. Usually encoded in the trnK tRNA gene intron. Probably assists in splicing its own and other chloroplast group II introns. This Banksia cuneata (Quairading banksia) protein is Maturase K.